The chain runs to 494 residues: Amidophosphoribosyltransferase (494 aa).

A propeptide spanning residues M1–E10 is cleaved from the precursor. The active-site Nucleophile is the C11. Residues C11–K231 enclose the Glutamine amidotransferase type-2 domain. The Mg(2+) site is built by S294, D356, and D357.

The protein in the C-terminal section; belongs to the purine/pyrimidine phosphoribosyltransferase family. Mg(2+) serves as cofactor.

It catalyses the reaction 5-phospho-beta-D-ribosylamine + L-glutamate + diphosphate = 5-phospho-alpha-D-ribose 1-diphosphate + L-glutamine + H2O. It participates in purine metabolism; IMP biosynthesis via de novo pathway; N(1)-(5-phospho-D-ribosyl)glycinamide from 5-phospho-alpha-D-ribose 1-diphosphate: step 1/2. Its function is as follows. Catalyzes the formation of phosphoribosylamine from phosphoribosylpyrophosphate (PRPP) and glutamine. In Staphylococcus aureus (strain COL), this protein is Amidophosphoribosyltransferase.